The sequence spans 154 residues: Prefoldin subunit 2 (154 aa).

Over residues 124 to 139 the composition is skewed to basic and acidic residues; it reads IRLMGEDEKPAAKENS. Residues 124 to 154 are disordered; the sequence is IRLMGEDEKPAAKENSEGAGAKASSAGVLVS. Residues 140–154 are compositionally biased toward low complexity; it reads EGAGAKASSAGVLVS.

The protein belongs to the prefoldin subunit beta family. As to quaternary structure, heterohexamer of two PFD-alpha type and four PFD-beta type subunits. Component of the PAQosome complex which is responsible for the biogenesis of several protein complexes and which consists of R2TP complex members RUVBL1, RUVBL2, RPAP3 and PIH1D1, URI complex members PFDN2, PFDN6, PDRG1, UXT and URI1 as well as ASDURF, POLR2E and DNAAF10/WDR92. Interacts with URI1; the interaction is phosphorylation-dependent and occurs in a growth-dependent manner.

It localises to the nucleus. Its subcellular location is the cytoplasm. The protein localises to the mitochondrion. Functionally, binds specifically to cytosolic chaperonin (c-CPN) and transfers target proteins to it. Binds to nascent polypeptide chain and promotes folding in an environment in which there are many competing pathways for nonnative proteins. The chain is Prefoldin subunit 2 (PFDN2) from Homo sapiens (Human).